The chain runs to 89 residues: Porphobilinogen deaminase (89 aa).

Belongs to the HMBS family. In terms of assembly, monomer. Requires dipyrromethane as cofactor.

It catalyses the reaction 4 porphobilinogen + H2O = hydroxymethylbilane + 4 NH4(+). It functions in the pathway porphyrin-containing compound metabolism; protoporphyrin-IX biosynthesis; coproporphyrinogen-III from 5-aminolevulinate: step 2/4. Functionally, tetrapolymerization of the monopyrrole PBG into the hydroxymethylbilane pre-uroporphyrinogen in several discrete steps. This Dickeya chrysanthemi (Pectobacterium chrysanthemi) protein is Porphobilinogen deaminase (hemC).